A 150-amino-acid chain; its full sequence is Large ribosomal subunit protein bL9 (150 aa).

This sequence belongs to the bacterial ribosomal protein bL9 family.

Functionally, binds to the 23S rRNA. The sequence is that of Large ribosomal subunit protein bL9 from Paraburkholderia phytofirmans (strain DSM 17436 / LMG 22146 / PsJN) (Burkholderia phytofirmans).